Consider the following 478-residue polypeptide: Lipoprotein lipase (478 aa).

The N-terminal stretch at 1–27 (MESKVLLLLALSVWLQSLTVSRGGLVA) is a signal peptide. The tract at residues 35 to 56 (KDFRDIESKFALRTPEDTAEDT) is interaction with GPIHBP1. A disulfide bridge connects residues cysteine 57 and cysteine 70. A glycan (N-linked (GlcNAc...) asparagine) is linked at asparagine 73. The residue at position 124 (tyrosine 124) is a 3'-nitrotyrosine. The Nucleophile role is filled by serine 162. Catalysis depends on aspartate 186, which acts as the Charge relay system. Tyrosine 194 is modified (3'-nitrotyrosine). Ca(2+) is bound by residues alanine 197, arginine 200, serine 202, and aspartate 205. Cysteine 246 and cysteine 269 are oxidised to a cystine. The essential for determining substrate specificity stretch occupies residues 246–269 (CNIGEALRVIAERGLGDVDQLVKC). Histidine 271 functions as the Charge relay system in the catalytic mechanism. 2 disulfides stabilise this stretch: cysteine 294–cysteine 313 and cysteine 305–cysteine 308. Residues 344-467 (FHYQVKIHFS…KGKSPVIFVK (124 aa)) enclose the PLAT domain. A 3'-nitrotyrosine modification is found at tyrosine 346. Asparagine 389 is a glycosylation site (N-linked (GlcNAc...) asparagine). The segment at 420 to 424 (WSNWW) is important for interaction with lipoprotein particles. The important for heparin binding stretch occupies residues 433–437 (KIRVK). The tract at residues 446–470 (IFCSREKMSYLQKGKSPVIFVKCHD) is interaction with GPIHBP1. Cysteine 448 and cysteine 468 are oxidised to a cystine.

This sequence belongs to the AB hydrolase superfamily. Lipase family. As to quaternary structure, homodimer. Interacts with GPIHBP1 with 1:1 stoichiometry. Interacts with APOC2; the interaction activates LPL activity in the presence of lipids. Interaction with heparan sulfate proteoglycans is required to protect LPL against loss of activity. Associates with lipoprotein particles in blood plasma. Interacts with LMF1 and SEL1L; interaction with SEL1L is required to prevent aggregation of newly synthesized LPL in the endoplasmic reticulum (ER), and for normal export of LPL from the ER to the extracellular space. Interacts with SORL1; SORL1 acts as a sorting receptor, promoting LPL localization to endosomes and later to lysosomes, leading to degradation of newly synthesized LPL. Post-translationally, tyrosine nitration after lipopolysaccharide (LPS) challenge down-regulates the lipase activity.

The protein resides in the cell membrane. Its subcellular location is the secreted. The protein localises to the extracellular space. It localises to the extracellular matrix. It carries out the reaction a triacylglycerol + H2O = a diacylglycerol + a fatty acid + H(+). The catalysed reaction is a 1,2-diacyl-sn-glycero-3-phosphocholine + H2O = a 2-acyl-sn-glycero-3-phosphocholine + a fatty acid + H(+). The enzyme catalyses 1,2,3-tri-(9Z-octadecenoyl)-glycerol + H2O = di-(9Z)-octadecenoylglycerol + (9Z)-octadecenoate + H(+). It catalyses the reaction 1,2-di-(9Z-octadecenoyl)-sn-glycero-3-phosphocholine + H2O = (9Z-octadecenoyl)-sn-glycero-3-phosphocholine + (9Z)-octadecenoate + H(+). It carries out the reaction 1,2,3-tributanoylglycerol + H2O = dibutanoylglycerol + butanoate + H(+). The catalysed reaction is 1,2-dihexadecanoyl-sn-glycero-3-phosphocholine + H2O = hexadecanoyl-sn-glycero-3-phosphocholine + hexadecanoate + H(+). The apolipoprotein APOC2 acts as a coactivator of LPL activity. Ca(2+) binding promotes protein stability and formation of the active homodimer. Interaction with GPIHBP1 protects LPL against inactivation by ANGPTL4. In terms of biological role, key enzyme in triglyceride metabolism. Catalyzes the hydrolysis of triglycerides from circulating chylomicrons and very low density lipoproteins (VLDL), and thereby plays an important role in lipid clearance from the blood stream, lipid utilization and storage. Although it has both phospholipase and triglyceride lipase activities it is primarily a triglyceride lipase with low but detectable phospholipase activity. Mediates margination of triglyceride-rich lipoprotein particles in capillaries. Recruited to its site of action on the luminal surface of vascular endothelium by binding to GPIHBP1 and cell surface heparan sulfate proteoglycans. The sequence is that of Lipoprotein lipase (LPL) from Ovis aries (Sheep).